We begin with the raw amino-acid sequence, 261 residues long: uncharacterized protein (261 aa).

The protein belongs to the FrhB family.

This is an uncharacterized protein from Methanocaldococcus jannaschii (strain ATCC 43067 / DSM 2661 / JAL-1 / JCM 10045 / NBRC 100440) (Methanococcus jannaschii).